The following is a 361-amino-acid chain: Ribosomal RNA small subunit methyltransferase H (361 aa).

S-adenosyl-L-methionine is bound by residues 54–56, Asp-74, Tyr-101, Asp-122, and Gln-129; that span reads GGH. The segment at 318-361 is disordered; it reads ARNSRASSAKLRAAQRLAEGQAPRPRRRNKYAPEGRDEPEGGAA. Positions 348-361 are enriched in basic and acidic residues; sequence YAPEGRDEPEGGAA.

This sequence belongs to the methyltransferase superfamily. RsmH family.

The protein resides in the cytoplasm. The catalysed reaction is cytidine(1402) in 16S rRNA + S-adenosyl-L-methionine = N(4)-methylcytidine(1402) in 16S rRNA + S-adenosyl-L-homocysteine + H(+). Functionally, specifically methylates the N4 position of cytidine in position 1402 (C1402) of 16S rRNA. In Nitratidesulfovibrio vulgaris (strain DSM 19637 / Miyazaki F) (Desulfovibrio vulgaris), this protein is Ribosomal RNA small subunit methyltransferase H.